The primary structure comprises 137 residues: Gonadotropin subunit beta-1 (137 aa).

Residues Met1 to Ala24 form the signal peptide. Disulfide bonds link Cys32–Cys78, Cys46–Cys93, Cys55–Cys108, Cys59–Cys110, and Cys113–Cys120. Asn36 carries N-linked (GlcNAc...) asparagine glycosylation.

This sequence belongs to the glycoprotein hormones subunit beta family. As to quaternary structure, heterodimer of an alpha and a beta chain.

Its subcellular location is the secreted. Involved in gametogenesis and steroidogenesis. The protein is Gonadotropin subunit beta-1 (cgba) of Oncorhynchus keta (Chum salmon).